The sequence spans 564 residues: 2-succinyl-5-enolpyruvyl-6-hydroxy-3-cyclohexene-1-carboxylate synthase (564 aa).

Belongs to the TPP enzyme family. MenD subfamily. Homodimer. It depends on Mg(2+) as a cofactor. Requires Mn(2+) as cofactor. Thiamine diphosphate serves as cofactor.

It carries out the reaction isochorismate + 2-oxoglutarate + H(+) = 5-enolpyruvoyl-6-hydroxy-2-succinyl-cyclohex-3-ene-1-carboxylate + CO2. The protein operates within quinol/quinone metabolism; 1,4-dihydroxy-2-naphthoate biosynthesis; 1,4-dihydroxy-2-naphthoate from chorismate: step 2/7. It functions in the pathway quinol/quinone metabolism; menaquinone biosynthesis. Its function is as follows. Catalyzes the thiamine diphosphate-dependent decarboxylation of 2-oxoglutarate and the subsequent addition of the resulting succinic semialdehyde-thiamine pyrophosphate anion to isochorismate to yield 2-succinyl-5-enolpyruvyl-6-hydroxy-3-cyclohexene-1-carboxylate (SEPHCHC). This is 2-succinyl-5-enolpyruvyl-6-hydroxy-3-cyclohexene-1-carboxylate synthase from Vibrio vulnificus (strain YJ016).